A 337-amino-acid polypeptide reads, in one-letter code: Viral cathepsin (337 aa).

A signal peptide spans 1–16; that stretch reads MNKLLILFLLLNAALT. The propeptide at 17-126 is activation peptide; that stretch reads RQDNHASANN…VVDGPAQRQR (110 aa). 3 disulfide bridges follow: cysteine 147–cysteine 188, cysteine 181–cysteine 221, and cysteine 276–cysteine 324. Cysteine 150 is a catalytic residue. Active-site residues include histidine 283 and asparagine 303.

This sequence belongs to the peptidase C1 family. Synthesized as an inactive proenzyme and activated by proteolytic removal of the inhibitory propeptide.

The catalysed reaction is Endopeptidase of broad specificity, hydrolyzing substrates of both cathepsin L and cathepsin B.. In terms of biological role, cysteine protease that plays an essential role in host liquefaction to facilitate horizontal transmission of the virus. May participate in the degradation of foreign protein expressed by the baculovirus system. This chain is Viral cathepsin (VCATH), found in Lepidoptera (butterflies and moths).